Reading from the N-terminus, the 87-residue chain is Exodeoxyribonuclease 7 small subunit (87 aa).

It belongs to the XseB family. As to quaternary structure, heterooligomer composed of large and small subunits.

It is found in the cytoplasm. The enzyme catalyses Exonucleolytic cleavage in either 5'- to 3'- or 3'- to 5'-direction to yield nucleoside 5'-phosphates.. Bidirectionally degrades single-stranded DNA into large acid-insoluble oligonucleotides, which are then degraded further into small acid-soluble oligonucleotides. This is Exodeoxyribonuclease 7 small subunit from Halorhodospira halophila (strain DSM 244 / SL1) (Ectothiorhodospira halophila (strain DSM 244 / SL1)).